A 685-amino-acid chain; its full sequence is Coiled-coil domain-containing protein 8 homolog (685 aa).

The segment at 93–127 (VGTYDSSNGSDSELSDFDTSKVKGNRSSSGRTRKV) is disordered. Phosphoserine is present on residues Ser-142 and Ser-146. 4 disordered regions span residues 207–263 (QRVK…GTRR), 281–538 (VPPF…KAEA), 558–579 (QRAEAIDSQRAEGPANQRTGAT), and 599–623 (REEAGPQGIQEASAGSGSRAQKQVK). Residues 219-228 (EVGQTQQAST) are compositionally biased toward polar residues. The segment covering 246–256 (DSSRNTGDRSD) has biased composition (basic and acidic residues). Low complexity-rich tracts occupy residues 299–329 (AENQGAEAAANQRAEPLASPRAEAAASPRAE), 337–353 (EAVASPRAEAAASPRAE), 361–401 (EAAA…PRAE), and 409–420 (EAAASPIAEAAA). Positions 425–440 (ELVDSPRAETAADPRA) are enriched in basic and acidic residues. The segment covering 458-468 (AAASPIAEAAA) has biased composition (low complexity). Positions 473–488 (ELVDSPRAETAADPRA) are enriched in basic and acidic residues. Residues 505-519 (EVAASPRAEAAASPR) show a composition bias toward low complexity. The segment covering 558–567 (QRAEAIDSQR) has biased composition (basic and acidic residues). Residues 611–622 (SAGSGSRAQKQV) are compositionally biased toward polar residues. Positions 647-653 (PRLPTLP) match the PxLPxI/L motif; mediates interaction with ANKRA2 motif.

In terms of assembly, component of the 3M complex, composed of core components CUL7, CCDC8 and OBSL1. Interacts (via PxLPxI/L motif) with ANKRA2 (via ankyrin repeats); may link the 3M complex to histone deacetylases including HDAC4 and HDAC5.

The protein resides in the cytoplasm. The protein localises to the cytoskeleton. Its subcellular location is the microtubule organizing center. It localises to the centrosome. Functionally, core component of the 3M complex, a complex required to regulate microtubule dynamics and genome integrity. It is unclear how the 3M complex regulates microtubules, it could act by controlling the level of a microtubule stabilizer. Required for localization of CUL7 to the centrosome. This chain is Coiled-coil domain-containing protein 8 homolog (Ccdc8), found in Mus musculus (Mouse).